Here is a 463-residue protein sequence, read N- to C-terminus: Chaperone SurA (463 aa).

The signal sequence occupies residues 1–25 (MTKPFSVVLASLLAITSTVSPLASA). 2 consecutive PpiC domains span residues 174–276 (GSQY…KLVE) and 289–388 (VTEY…QRVG). Disordered regions lie at residues 328–348 (QATAKESSEDTNSRGQGGDLG) and 432–463 (RTGDRADDNATAAPAKSADPAAPSPPPAKPTR). The span at 440–452 (NATAAPAKSADPA) shows a compositional bias: low complexity. Residues 453 to 463 (APSPPPAKPTR) are compositionally biased toward pro residues.

The protein localises to the periplasm. It carries out the reaction [protein]-peptidylproline (omega=180) = [protein]-peptidylproline (omega=0). Functionally, chaperone involved in the correct folding and assembly of outer membrane proteins. Recognizes specific patterns of aromatic residues and the orientation of their side chains, which are found more frequently in integral outer membrane proteins. May act in both early periplasmic and late outer membrane-associated steps of protein maturation. The chain is Chaperone SurA from Xanthomonas euvesicatoria pv. vesicatoria (strain 85-10) (Xanthomonas campestris pv. vesicatoria).